The sequence spans 314 residues: NF-kappa-B inhibitor alpha (314 aa).

The segment at 1–39 (MFQPAGHGQDWAMEGPRDGLKKERLVDDRHDSGLDSMKD) is disordered. Basic and acidic residues predominate over residues 15 to 39 (GPRDGLKKERLVDDRHDSGLDSMKD). Lys-21 is covalently cross-linked (Glycyl lysine isopeptide (Lys-Gly) (interchain with G-Cter in SUMO); alternate). Lys-21 participates in a covalent cross-link: Glycyl lysine isopeptide (Lys-Gly) (interchain with G-Cter in ubiquitin); alternate. Residue Lys-22 forms a Glycyl lysine isopeptide (Lys-Gly) (interchain with G-Cter in ubiquitin) linkage. Positions 30-36 (HDSGLDS) match the Destruction motif motif. Position 32 is a phosphoserine; by IKKA and IKKB (Ser-32). Ser-36 is subject to Phosphoserine; by IKKA, IKKB, IKKE and TBK1. Residue Tyr-42 is modified to Phosphotyrosine; by Tyr-kinases. A Nuclear export signal motif is present at residues 45–54 (MVKELREIRL). Residues 110 to 120 (LQQTPLHLAVI) carry the Nuclear import signal motif. ANK repeat units lie at residues 110–139 (LQQTPLHLAVITNQPGIAEALLKAGCDPEL), 143–172 (RGNTPLHLACEQGCLASVAVLTQTCTPQHL), 182–211 (NGHTCLHLASIHGYLGIVEHLVTLGADVNA), and 216–245 (NGRTALHLAVDLQNPDLVSLLLKCGADVNR). Residues Asn-210 and Asn-244 each carry the (3S)-3-hydroxyasparagine; by HIF1AN modification. Residues Ser-283 and Ser-288 each carry the phosphoserine; by CK2 modification. Thr-291 carries the post-translational modification Phosphothreonine; by CK2. Position 293 is a phosphoserine; by CK2 (Ser-293). Thr-296 carries the post-translational modification Phosphothreonine.

The protein belongs to the NF-kappa-B inhibitor family. In terms of assembly, interacts with RELA; the interaction requires the nuclear import signal. Part of a 70-90 kDa complex at least consisting of CHUK, IKBKB, NFKBIA, RELA, ELP1 and MAP3K14. Interacts with NKIRAS1 and NKIRAS2. Interacts with RWDD3; the interaction enhances sumoylation. Interacts with PRMT2. Interacts with PRKACA in platelets; this interaction is disrupted by thrombin and collagen. Interacts with MEFV. Interacts with DDRGK1; positively regulates NFKBIA phosphorylation and degradation. Interacts with HNRNPA2B1; the interaction may be mediated by the RRM2 domain of HNRNPA2B1, and HNRNPA2B1 may interact simultaneously with FAM76B and either NFKBIA or NFKBIE to form a complex. Post-translationally, phosphorylated at Ser-32 and Ser-36 by IKKA/CHUK and IKKB/IKBKB; disables inhibition of NF-kappa-B DNA-binding activity. Phosphorylation at positions 32 and 36 is prerequisite to recognition by the SCF(FBXW11) and SCF(BTRC) complexes, leading to polyubiquitination and subsequent degradation. In terms of processing, polyubiquitinated at Lys-21 and/or Lys-22 following phosphorylation at Ser-32 and Ser-36. Monoubiquitinated at Lys-21 and/or Lys-22 by UBE2D3. Ubiquitin chain elongation is then performed by CDC34 in cooperation with the SCF(FBXW11) E3 ligase complex, building ubiquitin chains from the UBE2D3-primed NFKBIA-linked ubiquitin. The resulting polyubiquitination leads to protein degradation. Also ubiquitinated by the SCF(BTRC) complex following stimulus-dependent phosphorylation at Ser-32 and Ser-36. Deubiquitinated by USP38, leading to NF-kappa-B inhibition. Sumoylated; sumoylation requires the presence of the nuclear import signal. Sumoylation blocks ubiquitination and proteasome-mediated degradation of the protein thereby increasing the protein stability. Post-translationally, hydroxylated by HIF1AN.

The protein localises to the cytoplasm. It is found in the nucleus. Functionally, inhibits the activity of dimeric NF-kappa-B/REL complexes by trapping REL (RELA/p65 and NFKB1/p50) dimers in the cytoplasm by masking their nuclear localization signals. On cellular stimulation by immune and pro-inflammatory responses, becomes phosphorylated promoting ubiquitination and degradation, enabling the dimeric RELA to translocate to the nucleus and activate transcription. The chain is NF-kappa-B inhibitor alpha (Nfkbia) from Rattus norvegicus (Rat).